Here is a 367-residue protein sequence, read N- to C-terminus: Flagellar P-ring protein (367 aa).

An N-terminal signal peptide occupies residues 1–22; the sequence is MRRMLVIRWILAIHLIATQVFA.

Belongs to the FlgI family. In terms of assembly, the basal body constitutes a major portion of the flagellar organelle and consists of four rings (L,P,S, and M) mounted on a central rod.

The protein localises to the periplasm. It is found in the bacterial flagellum basal body. In terms of biological role, assembles around the rod to form the L-ring and probably protects the motor/basal body from shearing forces during rotation. This Legionella pneumophila subsp. pneumophila (strain Philadelphia 1 / ATCC 33152 / DSM 7513) protein is Flagellar P-ring protein.